The sequence spans 306 residues: Tryptophan 2,3-dioxygenase (306 aa).

The tract at residues 1–29 (MQPPGDDAAPRCPFAGAHAPDAPHVPEAA) is disordered. Substrate contacts are provided by residues 75-79 (FIIQH), Tyr-137, and Arg-141. His-264 is a heme binding site. Position 278 (Thr-278) interacts with substrate.

It belongs to the tryptophan 2,3-dioxygenase family. Homotetramer. Requires heme as cofactor.

It carries out the reaction L-tryptophan + O2 = N-formyl-L-kynurenine. It participates in amino-acid degradation; L-tryptophan degradation via kynurenine pathway; L-kynurenine from L-tryptophan: step 1/2. Functionally, heme-dependent dioxygenase that catalyzes the oxidative cleavage of the L-tryptophan (L-Trp) pyrrole ring and converts L-tryptophan to N-formyl-L-kynurenine. Catalyzes the oxidative cleavage of the indole moiety. This is Tryptophan 2,3-dioxygenase from Burkholderia mallei (strain NCTC 10247).